The following is a 151-amino-acid chain: MEKEKNKKTSSLNVLSIAGLQPYQKKIDEEYMNKDQILHFYKILETWKTQLQDEINHTLLYIQDNATNFPDPIDRATQEEEFSLDLRNRDRSRKLIKKIEITLKKIKEKDFGYCNSCSVEIGIRRLEARPTADLCIDCKTLAEIREKQMTG.

Zn(2+) contacts are provided by cysteine 114, cysteine 117, cysteine 135, and cysteine 138. The segment at 114–138 (CNSCSVEIGIRRLEARPTADLCIDC) adopts a dksA C4-type zinc-finger fold.

Belongs to the DksA family. In terms of assembly, interacts directly with the RNA polymerase.

It is found in the cytoplasm. Its function is as follows. Transcription factor that acts by binding directly to the RNA polymerase (RNAP). Required for negative regulation of rRNA expression and positive regulation of several amino acid biosynthesis promoters. Also required for regulation of fis expression. In Buchnera aphidicola subsp. Acyrthosiphon pisum (strain APS) (Acyrthosiphon pisum symbiotic bacterium), this protein is RNA polymerase-binding transcription factor DksA.